Consider the following 200-residue polypeptide: MVLFTLEDFAVFKATTLATRMHLIREQLDPKFAEAATVIVPLLQTDQQAIYSHIAKHQRRYRNPPPNTWVAFSTSSRGYKMVPHLALGFWDDRLFLWLSVLRESKPASRVLTGITAMATTLPGKWQVAGEHTDKAMLPLTSANLATVGARFQTIKKAEFLLGKVYLADDPIWADPVRLWQDIQQRVVALKPMFDQLVQNV.

Belongs to the UPF0637 family.

The sequence is that of UPF0637 protein LCABL_14170 from Lacticaseibacillus casei (strain BL23) (Lactobacillus casei).